The chain runs to 311 residues: Homoserine O-acetyltransferase (311 aa).

The active-site Acyl-thioester intermediate is the C142. Residues K163 and S192 each coordinate substrate. The active-site Proton acceptor is the H235. Residue E237 is part of the active site. Residue R249 participates in substrate binding.

The protein belongs to the MetA family.

The protein localises to the cytoplasm. The enzyme catalyses L-homoserine + acetyl-CoA = O-acetyl-L-homoserine + CoA. The protein operates within amino-acid biosynthesis; L-methionine biosynthesis via de novo pathway; O-acetyl-L-homoserine from L-homoserine: step 1/1. Functionally, transfers an acetyl group from acetyl-CoA to L-homoserine, forming acetyl-L-homoserine. The sequence is that of Homoserine O-acetyltransferase from Lysinibacillus sphaericus (strain C3-41).